The chain runs to 369 residues: Peridinin-chlorophyll a-binding protein 2, chloroplastic (369 aa).

The transit peptide at 1–56 directs the protein to the chloroplast; the sequence is MVRSGKKAVVLATVAFCATSVVQKTCGFVPSPLRQRAAAAGAAASVATMFAPAAFA. Tandem repeats lie at residues 57–219 and 220–369.

As to quaternary structure, homotrimer.

The protein resides in the plastid. It is found in the chloroplast. Its function is as follows. Water-soluble antenna for capture of solar energy in the blue-green range. Peridinin is an asymmetric carotenoid. The protein is Peridinin-chlorophyll a-binding protein 2, chloroplastic of Amphidinium carterae (Dinoflagellate).